A 301-amino-acid chain; its full sequence is Light-independent protochlorophyllide reductase iron-sulfur ATP-binding protein (301 aa).

Positions 1–26 (MSNGSVPVSGIGGRGDGEGSSQVHME) are disordered. ATP-binding positions include 44–49 (GIGKST) and K73. Residue S48 participates in Mg(2+) binding. Residues C129 and C163 each contribute to the [4Fe-4S] cluster site. 214–215 (NR) contacts ATP.

The protein belongs to the NifH/BchL/ChlL family. As to quaternary structure, homodimer. Protochlorophyllide reductase is composed of three subunits; BchL, BchN and BchB. [4Fe-4S] cluster is required as a cofactor.

It catalyses the reaction chlorophyllide a + oxidized 2[4Fe-4S]-[ferredoxin] + 2 ADP + 2 phosphate = protochlorophyllide a + reduced 2[4Fe-4S]-[ferredoxin] + 2 ATP + 2 H2O. It functions in the pathway porphyrin-containing compound metabolism; bacteriochlorophyll biosynthesis (light-independent). In terms of biological role, component of the dark-operative protochlorophyllide reductase (DPOR) that uses Mg-ATP and reduced ferredoxin to reduce ring D of protochlorophyllide (Pchlide) to form chlorophyllide a (Chlide). This reaction is light-independent. The L component serves as a unique electron donor to the NB-component of the complex, and binds Mg-ATP. The chain is Light-independent protochlorophyllide reductase iron-sulfur ATP-binding protein from Halorhodospira halophila (strain DSM 244 / SL1) (Ectothiorhodospira halophila (strain DSM 244 / SL1)).